The primary structure comprises 266 residues: 4-hydroxy-tetrahydrodipicolinate reductase (266 aa).

Residues 7 to 12, glutamate 33, 96 to 98, and 120 to 123 contribute to the NAD(+) site; these read GTIGRM, GTT, and APNM. Histidine 153 serves as the catalytic Proton donor/acceptor. Position 154 (histidine 154) interacts with (S)-2,3,4,5-tetrahydrodipicolinate. Lysine 157 serves as the catalytic Proton donor. 163-164 provides a ligand contact to (S)-2,3,4,5-tetrahydrodipicolinate; sequence GT.

The protein belongs to the DapB family.

The protein localises to the cytoplasm. The enzyme catalyses (S)-2,3,4,5-tetrahydrodipicolinate + NAD(+) + H2O = (2S,4S)-4-hydroxy-2,3,4,5-tetrahydrodipicolinate + NADH + H(+). The catalysed reaction is (S)-2,3,4,5-tetrahydrodipicolinate + NADP(+) + H2O = (2S,4S)-4-hydroxy-2,3,4,5-tetrahydrodipicolinate + NADPH + H(+). It functions in the pathway amino-acid biosynthesis; L-lysine biosynthesis via DAP pathway; (S)-tetrahydrodipicolinate from L-aspartate: step 4/4. In terms of biological role, catalyzes the conversion of 4-hydroxy-tetrahydrodipicolinate (HTPA) to tetrahydrodipicolinate. The chain is 4-hydroxy-tetrahydrodipicolinate reductase from Polynucleobacter necessarius subsp. necessarius (strain STIR1).